The sequence spans 1860 residues: Collagen alpha-1(XXVII) chain (1860 aa).

The N-terminal stretch at 1 to 41 is a signal peptide; that stretch reads MGAGSARGARGTAAAAAARGGGFLFSWILVSFACHLASTQG. Residues 42 to 624 constitute a propeptide, N-terminal propeptide; sequence APEDVDILQR…AGSTPFPLLM (583 aa). Residues 71 to 236 enclose the Laminin G-like domain; sequence QSGFIFTQRA…NYCTHLRKQC (166 aa). The N-linked (GlcNAc...) asparagine glycan is linked to Asn271. Disordered regions lie at residues 278–608, 625–772, and 851–1625; these read ALGS…TSSG, GPPG…GSDG, and LKGD…IQLQ. Polar residues-rich tracts occupy residues 298-309 and 386-409; these read TKPQRTSPTNPH and HPTQKTAPSSFTKSALPTQKQVPP. Over residues 432-445 the composition is skewed to pro residues; sequence MPRPPPPSTRPLPP. 2 stretches are compositionally biased toward low complexity: residues 446 to 457 and 485 to 505; these read TTSSSKKPIPTL and TALSSSPAPTPGSTRSTRPPA. The segment covering 509–518 has biased composition (polar residues); it reads PPTSGTSTPR. Low complexity-rich tracts occupy residues 572–588 and 599–608; these read TTRPSPRQPQPSQQTTP and SSSPRPTSSG. Collagen-like domains follow at residues 625-679, 688-747, 748-807, 808-867, 871-930, 931-990, 1003-1062, 1066-1125, 1126-1185, 1192-1251, 1258-1317, 1318-1378, 1382-1441, 1442-1501, 1502-1561, and 1562-1621; these read GPPG…GDPG, GAKG…PGPV, GDPG…DGNP, GELG…SGDP, GDKG…KGKP, GARG…PGPV, GEPG…RGAK, GPRG…PGTK, GLPG…IGQR, GDSG…QGEK, GAKG…KGIV, GPLG…RGKP, GQPG…EGIA, GPDG…PGQL, GPPG…QGPR, and GPPG…PGGP. A triple-helical region region spans residues 625–1618; the sequence is GPPGPKGDCG…RGRPGPPGPP (994 aa). Pro residues predominate over residues 654 to 669; that stretch reads RGPPGPYGNPGLPGPP. A compositionally biased stretch (low complexity) spans 714-734; sequence PGPAGHPGEQGQPGPEGSPGA. Composition is skewed to low complexity over residues 911 to 924 and 932 to 944; these read FPGDIGPPGDNGPE and ARGLPGPRGQLGP. Residues 1033–1042 show a composition bias toward gly residues; sequence GMPGGMGTPG. Residues 1043–1053 are compositionally biased toward pro residues; the sequence is EPGPQGPPGSR. The span at 1130 to 1142 shows a compositional bias: pro residues; it reads EPGPQGPQGPIGP. 2 stretches are compositionally biased toward basic and acidic residues: residues 1202–1220 and 1241–1253; these read LKGDRGDPGPDGEHGEKGQ and PEGKSGKQGEKGR. 2 stretches are compositionally biased toward basic and acidic residues: residues 1326-1338 and 1350-1360; these read KGEKGEQGEDGKA and PVGDRGDRGEP. A compositionally biased stretch (low complexity) spans 1449–1458; that stretch reads RDGQAGQQGE. Low complexity predominate over residues 1572-1587; the sequence is IVGPLGILGPSGLPGP. Over residues 1603-1620 the composition is skewed to pro residues; it reads RGPPGPRGRPGPPGPPGG. The propeptide at 1622–1860 is C-terminal propeptide; the sequence is IQLQQDDLGA…RLEVGPACFL (239 aa). A Fibrillar collagen NC1 domain is found at 1660–1860; the sequence is GEIFKTLHYL…RLEVGPACFL (201 aa). Intrachain disulfides connect Cys1690/Cys1722, Cys1731/Cys1858, and Cys1767/Cys1811. Ca(2+) contacts are provided by Asp1708, Asn1710, Cys1713, and Asp1716. N-linked (GlcNAc...) asparagine glycosylation occurs at Asn1769.

This sequence belongs to the fibrillar collagen family.

The protein resides in the secreted. It is found in the extracellular space. It localises to the extracellular matrix. In terms of biological role, plays a role during the calcification of cartilage and the transition of cartilage to bone. This is Collagen alpha-1(XXVII) chain (COL27A1) from Homo sapiens (Human).